Here is a 473-residue protein sequence, read N- to C-terminus: ATP synthase subunit beta (473 aa).

ATP is bound at residue 158–165 (GGAGVGKT).

This sequence belongs to the ATPase alpha/beta chains family. As to quaternary structure, F-type ATPases have 2 components, CF(1) - the catalytic core - and CF(0) - the membrane proton channel. CF(1) has five subunits: alpha(3), beta(3), gamma(1), delta(1), epsilon(1). CF(0) has three main subunits: a(1), b(2) and c(9-12). The alpha and beta chains form an alternating ring which encloses part of the gamma chain. CF(1) is attached to CF(0) by a central stalk formed by the gamma and epsilon chains, while a peripheral stalk is formed by the delta and b chains.

The protein localises to the cell membrane. It catalyses the reaction ATP + H2O + 4 H(+)(in) = ADP + phosphate + 5 H(+)(out). In terms of biological role, produces ATP from ADP in the presence of a proton gradient across the membrane. The catalytic sites are hosted primarily by the beta subunits. The sequence is that of ATP synthase subunit beta from Bacillus caldotenax.